The primary structure comprises 501 residues: Phase 2 flagellin (501 aa).

This sequence belongs to the bacterial flagellin family.

It is found in the secreted. The protein resides in the bacterial flagellum. In terms of biological role, flagellin is the subunit protein which polymerizes to form the filaments of bacterial flagella. The protein is Phase 2 flagellin (fljB) of Salmonella abortus-equi.